Consider the following 235-residue polypeptide: Proteasome subunit alpha (235 aa).

The protein belongs to the peptidase T1A family. The 20S proteasome core is composed of 14 alpha and 14 beta subunits that assemble into four stacked heptameric rings, resulting in a barrel-shaped structure. The two inner rings, each composed of seven catalytic beta subunits, are sandwiched by two outer rings, each composed of seven alpha subunits. The catalytic chamber with the active sites is on the inside of the barrel. Has a gated structure, the ends of the cylinder being occluded by the N-termini of the alpha-subunits. Is capped by the proteasome-associated ATPase, ARC.

The protein localises to the cytoplasm. The protein operates within protein degradation; proteasomal Pup-dependent pathway. The formation of the proteasomal ATPase ARC-20S proteasome complex, likely via the docking of the C-termini of ARC into the intersubunit pockets in the alpha-rings, may trigger opening of the gate for substrate entry. Interconversion between the open-gate and close-gate conformations leads to a dynamic regulation of the 20S proteasome proteolysis activity. Its function is as follows. Component of the proteasome core, a large protease complex with broad specificity involved in protein degradation. The sequence is that of Proteasome subunit alpha from Arthrobacter sp. (strain FB24).